We begin with the raw amino-acid sequence, 339 residues long: NADH-quinone oxidoreductase subunit H (339 aa).

Transmembrane regions (helical) follow at residues 10 to 30 (FPLT…ILCV), 50 to 70 (PNVV…KLLF), 82 to 102 (ILFI…WAVI), 115 to 135 (VGVL…IIAG), 155 to 175 (ISYE…TGTL), 187 to 207 (LPWW…ISVL), 235 to 255 (MGFA…SAMT), 275 to 295 (IPGF…FLWI), and 311 to 331 (GWKV…SVLF).

The protein belongs to the complex I subunit 1 family. As to quaternary structure, NDH-1 is composed of 14 different subunits. Subunits NuoA, H, J, K, L, M, N constitute the membrane sector of the complex.

The protein resides in the cell inner membrane. It catalyses the reaction a quinone + NADH + 5 H(+)(in) = a quinol + NAD(+) + 4 H(+)(out). Functionally, NDH-1 shuttles electrons from NADH, via FMN and iron-sulfur (Fe-S) centers, to quinones in the respiratory chain. The immediate electron acceptor for the enzyme in this species is believed to be ubiquinone. Couples the redox reaction to proton translocation (for every two electrons transferred, four hydrogen ions are translocated across the cytoplasmic membrane), and thus conserves the redox energy in a proton gradient. This subunit may bind ubiquinone. The protein is NADH-quinone oxidoreductase subunit H of Rickettsia typhi (strain ATCC VR-144 / Wilmington).